Consider the following 275-residue polypeptide: Bis(5'-nucleosyl)-tetraphosphatase, symmetrical (275 aa).

The protein belongs to the Ap4A hydrolase family.

The enzyme catalyses P(1),P(4)-bis(5'-adenosyl) tetraphosphate + H2O = 2 ADP + 2 H(+). In terms of biological role, hydrolyzes diadenosine 5',5'''-P1,P4-tetraphosphate to yield ADP. This is Bis(5'-nucleosyl)-tetraphosphatase, symmetrical (apaH) from Pasteurella multocida (strain Pm70).